A 108-amino-acid chain; its full sequence is uncharacterized protein (108 aa).

Asn33 carries N-linked (GlcNAc...) asparagine glycosylation.

N-glycosylated.

This is an uncharacterized protein from Saccharomyces cerevisiae (strain ATCC 204508 / S288c) (Baker's yeast).